The sequence spans 391 residues: Succinate--CoA ligase [GDP-forming] subunit beta, mitochondrial (391 aa).

One can recognise an ATP-grasp domain in the interval 5 to 233 (KKIMADHGVT…NAEFRQKEIF (229 aa)). GTP is bound by residues glutamine 16, 49-51 (GRG), and leucine 105. The Mg(2+) site is built by asparagine 202 and aspartate 216. Substrate-binding positions include asparagine 267 and 324–326 (GIV).

It belongs to the succinate/malate CoA ligase beta subunit family. GTP-specific subunit beta subfamily. In terms of assembly, heterodimer of an alpha and a beta subunit. The beta subunit determines specificity for GTP. The cofactor is Mg(2+). As to expression, widely expressed. Not present in breast muscle.

It localises to the mitochondrion. The catalysed reaction is GTP + succinate + CoA = succinyl-CoA + GDP + phosphate. The protein operates within carbohydrate metabolism; tricarboxylic acid cycle; succinate from succinyl-CoA (ligase route): step 1/1. Its function is as follows. GTP-specific succinyl-CoA synthetase functions in the citric acid cycle (TCA), coupling the hydrolysis of succinyl-CoA to the synthesis of GTP and thus represents the only step of substrate-level phosphorylation in the TCA. The beta subunit provides nucleotide specificity of the enzyme and binds the substrate succinate, while the binding sites for coenzyme A and phosphate are found in the alpha subunit. The polypeptide is Succinate--CoA ligase [GDP-forming] subunit beta, mitochondrial (Columba livia (Rock dove)).